A 317-amino-acid chain; its full sequence is Serpentine receptor class delta-47 (317 aa).

The next 7 helical transmembrane spans lie at Ile8 to Val28, Val42 to Leu62, Cys89 to Ile109, Ile128 to Val148, Tyr185 to Thr205, Ala239 to Thr259, and Ile270 to Ala290.

It belongs to the nematode receptor-like protein srd family.

Its subcellular location is the membrane. The polypeptide is Serpentine receptor class delta-47 (srd-47) (Caenorhabditis elegans).